The primary structure comprises 348 residues: Mitochondrial glycine transporter (348 aa).

Solcar repeat units lie at residues 10–94 (TKST…IREN), 130–214 (LSNT…SKQH), and 249–333 (RAAS…LIRR). 6 consecutive transmembrane segments (helical) span residues 16-41 (FVAGLGSGVLSAILLQPIDLLKTRVQ), 69-95 (GTLPSALRTGFGSAIYFTTLNTIRENA), 136-161 (LLAGAVARSFAGFILMPLTVLKVRYE), 189-212 (GFGATAIRDAPYAGLYVLFYEKSK), 253-279 (INFASGVFSAIICSIISNPFDAVKTRI), and 308-326 (GLALRMSRKAMSSALAWTV).

This sequence belongs to the mitochondrial carrier (TC 2.A.29) family. SLC25A38 subfamily.

The protein resides in the mitochondrion inner membrane. It carries out the reaction glycine(in) = glycine(out). In terms of biological role, mitochondrial glycine transporter that imports glycine into the mitochondrial matrix. Plays an important role in providing glycine for the first enzymatic step in heme biosynthesis, the condensation of glycine with succinyl-CoA to produce 5-aminolevulinate (ALA) in the mitochondrial matrix. The sequence is that of Mitochondrial glycine transporter (mic-13) from Neurospora crassa (strain ATCC 24698 / 74-OR23-1A / CBS 708.71 / DSM 1257 / FGSC 987).